The following is a 347-amino-acid chain: Gamma-glutamyl hydrolase 2 (347 aa).

A signal peptide spans 1–22 (MWSYVWLPLVALSLFKDSIIMA). One can recognise a Gamma-glutamyl hydrolase domain in the interval 45–341 (APDPNLNYRP…IGYDEVYIFT (297 aa)). Cys155 functions as the Nucleophile in the catalytic mechanism. The Proton donor role is filled by His268.

It belongs to the peptidase C26 family. Expressed in roots, in leaves, stems and siliques.

It is found in the vacuole. The protein resides in the secreted. Its subcellular location is the extracellular space. The protein localises to the cell wall. The catalysed reaction is (6S)-5,6,7,8-tetrahydrofolyl-(gamma-L-Glu)(n) + (n-1) H2O = (6S)-5,6,7,8-tetrahydrofolate + (n-1) L-glutamate. Functionally, cleaves the polyglutamate sidechains of folate polyglutamates in the vacuole. Is important for polyglutamyl tail length determination before vacuolar exit. Plays a role on folate stability and intracellular folate content. Has endopeptidase activity against 4-amino-10-methylpteroyl penta-, tetra-, tri- and di-gamma-L-glutamate substrates and is responsible for the production of folic acid, also called pteroylglutamic acid (PteGlu) from teroylpolyglutamates. This is Gamma-glutamyl hydrolase 2 (GGH2) from Arabidopsis thaliana (Mouse-ear cress).